Consider the following 492-residue polypeptide: Phosphoenolpyruvate carboxylase (492 aa).

This sequence belongs to the PEPCase type 2 family. In terms of assembly, homotetramer. Requires Mg(2+) as cofactor.

It carries out the reaction oxaloacetate + phosphate = phosphoenolpyruvate + hydrogencarbonate. Functionally, catalyzes the irreversible beta-carboxylation of phosphoenolpyruvate (PEP) to form oxaloacetate (OAA), a four-carbon dicarboxylic acid source for the tricarboxylic acid cycle. The sequence is that of Phosphoenolpyruvate carboxylase from Halobacterium salinarum (strain ATCC 29341 / DSM 671 / R1).